The following is a 251-amino-acid chain: Phosphate import ATP-binding protein PstB (251 aa).

Residues 5-246 form the ABC transporter domain; the sequence is FDIRNFSVYY…PEKELTEKYL (242 aa). 37–44 contacts ATP; the sequence is GPSGCGKS.

This sequence belongs to the ABC transporter superfamily. Phosphate importer (TC 3.A.1.7) family. The complex is composed of two ATP-binding proteins (PstB), two transmembrane proteins (PstC and PstA) and a solute-binding protein (PstS).

The protein resides in the cell membrane. The catalysed reaction is phosphate(out) + ATP + H2O = ADP + 2 phosphate(in) + H(+). Functionally, part of the ABC transporter complex PstSACB involved in phosphate import. Responsible for energy coupling to the transport system. The sequence is that of Phosphate import ATP-binding protein PstB from Archaeoglobus fulgidus (strain ATCC 49558 / DSM 4304 / JCM 9628 / NBRC 100126 / VC-16).